Consider the following 357-residue polypeptide: Hydroxyproline O-arabinosyltransferase RDN1 (357 aa).

The helical; Signal-anchor transmembrane segment at 13–33 (LLMLLMVLGFSFATYNLVFMM) threads the bilayer.

Expressed in the vasculature of leaves, petioles, stems and roots. Expressed in the vascular cylinder throughout the root, and nodule vasculature.

The protein localises to the golgi apparatus membrane. The enzyme catalyses trans-4-hydroxy-L-prolyl-[protein] + UDP-beta-L-arabinofuranose = O-(beta-L-arabinofuranosyl)-trans-4-hydroxy-L-prolyl-[protein] + UDP + H(+). Its function is as follows. Probable glycosyltransferase involved in the O-arabinosylation of several proteins including extensins and small signaling peptides. Catalyzes the transfer of the initial L-arabinose to the hydroxyl group of Hyp residues. Probably involved in the arabinosylation of CLE12, a signaling peptide that moves from root to shoot, to interact with SUNN receptor kinase signaling that regulates nodulation. Involved in long distance nodulation signaling events. Involved in the autoregulation of nodulation (AON), a long distance systemic signaling from root to shoot and back again, which allows legumes to limit the number of root nodules formed based on available nitrogen and previous rhizobial colonization. Functions in the root, upstream of the shoot receptor kinase SUNN and via CLE peptide, to control AON. This Medicago truncatula (Barrel medic) protein is Hydroxyproline O-arabinosyltransferase RDN1.